Consider the following 450-residue polypeptide: Glucose-6-phosphate isomerase (450 aa).

E291 functions as the Proton donor in the catalytic mechanism. Catalysis depends on residues H312 and K426.

The protein belongs to the GPI family.

The protein localises to the cytoplasm. The enzyme catalyses alpha-D-glucose 6-phosphate = beta-D-fructose 6-phosphate. It participates in carbohydrate biosynthesis; gluconeogenesis. It functions in the pathway carbohydrate degradation; glycolysis; D-glyceraldehyde 3-phosphate and glycerone phosphate from D-glucose: step 2/4. Functionally, catalyzes the reversible isomerization of glucose-6-phosphate to fructose-6-phosphate. The chain is Glucose-6-phosphate isomerase from Clostridium novyi (strain NT).